Here is a 95-residue protein sequence, read N- to C-terminus: Probable FAD-linked sulfhydryl oxidase OPG072 (95 aa).

At 1-8 the chain is on the intravirion side; it reads MNPKHWGR. The ERV/ALR sulfhydryl oxidase domain occupies 1 to 95; the sequence is MNPKHWGRAA…AIDVSKVKPL (95 aa). Residues 9–25 traverse the membrane as a helical segment; the sequence is AAWTIIFIVLSQAGLDG. The Virion surface segment spans residues 26-95; it reads NIEACKRKLY…AIDVSKVKPL (70 aa). A disulfide bond links C43 and C46.

The protein belongs to the orthopoxvirus OPG072 family. As to quaternary structure, interacts with OPG128; this interaction involves formation of a transient disulfide-bonded intermediate, allowing disulfide bond transfer. Requires FAD as cofactor.

Its subcellular location is the virion membrane. It localises to the host cytoplasm. The enzyme catalyses 2 R'C(R)SH + O2 = R'C(R)S-S(R)CR' + H2O2. In terms of biological role, FAD-dependent sulfhydryl oxidase that catalyzes disulfide bond formation. The complete pathway for formation of disulfide bonds in intracellular virion membrane proteins sequentially involves thiol-disulfide transfer between OPG072, OPG128 and OPG088. The polypeptide is Probable FAD-linked sulfhydryl oxidase OPG072 (OPG072) (Variola virus (isolate Human/India/Ind3/1967) (VARV)).